We begin with the raw amino-acid sequence, 58 residues long: UPF0339 protein Msl4696 (58 aa).

This sequence belongs to the UPF0339 family.

The protein is UPF0339 protein Msl4696 of Mesorhizobium japonicum (strain LMG 29417 / CECT 9101 / MAFF 303099) (Mesorhizobium loti (strain MAFF 303099)).